A 509-amino-acid chain; its full sequence is Putative ATP-dependent RNA helicase QP509L (509 aa).

In terms of domain architecture, Helicase ATP-binding spans 110-262 (KKLLSPYGRF…KIILHHLGQP (153 aa)). ATP is bound at residue 123-130 (LNTGLGKT). The short motif at 215–218 (DEAH) is the DEAH box element.

It belongs to the DEAD box helicase family. DEAH subfamily.

It catalyses the reaction ATP + H2O = ADP + phosphate + H(+). The chain is Putative ATP-dependent RNA helicase QP509L from Ornithodoros (relapsing fever ticks).